A 185-amino-acid polypeptide reads, in one-letter code: Superoxide dismutase [Cu-Zn] (185 aa).

An N-terminal signal peptide occupies residues 1–18 (MTAFYKLCGMSMLSLVLA). The Cu cation site is built by histidine 85, histidine 87, and histidine 102. Cysteines 92 and 180 form a disulfide. Residues histidine 102, histidine 111, histidine 120, and aspartate 123 each contribute to the Zn(2+) site. Histidine 158 serves as a coordination point for Cu cation.

This sequence belongs to the Cu-Zn superoxide dismutase family. In terms of assembly, homodimer. Cu cation serves as cofactor. The cofactor is Zn(2+).

The protein localises to the periplasm. It carries out the reaction 2 superoxide + 2 H(+) = H2O2 + O2. In terms of biological role, destroys radicals which are normally produced within the cells and which are toxic to biological systems. This chain is Superoxide dismutase [Cu-Zn] (sodC), found in Francisella tularensis subsp. holarctica (strain LVS).